The sequence spans 368 residues: Probable magnesium transporter NIPA3 (368 aa).

Over 1–18 (MASLSGSWRDAYKGMSSD) the chain is Extracellular. Residues 19–39 (NIKGLVLALSSSLFIGASFIV) form a helical membrane-spanning segment. Over 40–66 (KKKGLKRAGASGLRAGSGGYSYLLEPL) the chain is Cytoplasmic. A helical transmembrane segment spans residues 67–87 (WWVGMITMIVGEIANFAAYAF). Topologically, residues 88 to 90 (APA) are extracellular. Residues 91–111 (ILVTPLGALSIIISAALAHVI) traverse the membrane as a helical segment. At 112-115 (LHEK) the chain is on the cytoplasmic side. Residues 116–136 (LHTFGLLGCVLCVVGSITIVL) traverse the membrane as a helical segment. Over 137 to 157 (HAPQEQEIDSVLQVWNLATEP) the chain is Extracellular. A helical transmembrane segment spans residues 158 to 178 (AFLLYAAAVVGAAIILIVQFV). Topologically, residues 179-189 (PQYGQSHVMVY) are cytoplasmic. Residues 190–210 (IGVCSLVGSLSVMSVKALGIA) form a helical membrane-spanning segment. The Extracellular portion of the chain corresponds to 211 to 220 (LKLTFSGMNQ). A helical transmembrane segment spans residues 221-241 (LIYPQTWVFTLIVLTCVITQM). The Cytoplasmic portion of the chain corresponds to 242 to 255 (NYLNKALDTFNTAV). Residues 256–276 (VSPIYYVMFTSLTILASVIMF) form a helical membrane-spanning segment. The Extracellular portion of the chain corresponds to 277–283 (KDWDRQD). The helical transmembrane segment at 284 to 304 (GTQIVTELCGFVTILSGTFLL) threads the bilayer. Over 305–368 (HKTKDMVDGS…ILPQDGPEAV (64 aa)) the chain is Cytoplasmic.

This sequence belongs to the NIPA (TC 2.A.7) family. Homodimer.

The protein localises to the cell membrane. Its subcellular location is the early endosome. Acts as a Mg(2+) transporter. Can also transport other divalent cations such as Fe(2+), Sr(2+), Ba(2+), Mn(2+) and Co(2+) but to a much less extent than Mg(2+). In Arabidopsis thaliana (Mouse-ear cress), this protein is Probable magnesium transporter NIPA3.